Consider the following 77-residue polypeptide: Large ribosomal subunit protein uL24 (77 aa).

The protein belongs to the universal ribosomal protein uL24 family. As to quaternary structure, part of the 50S ribosomal subunit.

In terms of biological role, one of two assembly initiator proteins, it binds directly to the 5'-end of the 23S rRNA, where it nucleates assembly of the 50S subunit. Its function is as follows. One of the proteins that surrounds the polypeptide exit tunnel on the outside of the subunit. This Sulfurovum sp. (strain NBC37-1) protein is Large ribosomal subunit protein uL24.